The primary structure comprises 1032 residues: Probable ATP-dependent RNA helicase DDX46 (1032 aa).

Basic residues predominate over residues 1–24 (MGRESRHYRKRSASRGRSGSRSRS). A disordered region spans residues 1–227 (MGRESRHYRK…NEMEDEELDP (227 aa)). Residue Gly-2 is the site of N-myristoyl glycine attachment. The segment covering 26 to 49 (SPSDKRSKRGDDRRSRSRDRDRRR) has biased composition (basic and acidic residues). 2 stretches are compositionally biased toward basic residues: residues 50–73 (ERSR…RSRS) and 81–103 (ERRR…RRSR). Basic and acidic residues predominate over residues 112-200 (KKAENRSRSK…EMKQGKKWSL (89 aa)). A coiled-coil region spans residues 152 to 197 (DQNKLEEEMRKRKERVEKWREEQRKKAMENIGELKKEIEEMKQGKK). Lys-186 is covalently cross-linked (Glycyl lysine isopeptide (Lys-Gly) (interchain with G-Cter in SUMO2)). A Phosphoserine modification is found at Ser-199. The span at 201 to 211 (EDDDDDEDDPA) shows a compositional bias: acidic residues. The residue at position 263 (Lys-263) is an N6-acetyllysine. Tyr-294 bears the Phosphotyrosine mark. 2 positions are modified to phosphoserine: Ser-295 and Ser-296. Lys-325 participates in a covalent cross-link: Glycyl lysine isopeptide (Lys-Gly) (interchain with G-Cter in SUMO2). Ser-346 carries the post-translational modification Phosphoserine. Residues 372-400 (KSWVQCGISMKILNSLKKHGYEKPTPIQT) carry the Q motif motif. In terms of domain architecture, Helicase ATP-binding spans 403 to 581 (IPAIMSGRDL…RRILSKPIEV (179 aa)). Positions 529–532 (DEAD) match the DEAD box motif. In terms of domain architecture, Helicase C-terminal spans 592–753 (DVEQQVIVIE…AVPPDLEKLW (162 aa)). Lys-776 bears the N6-acetyllysine mark. Lys-779 participates in a covalent cross-link: Glycyl lysine isopeptide (Lys-Gly) (interchain with G-Cter in SUMO2). A Phosphoserine modification is found at Ser-804. Lys-904 is modified (N6-acetyllysine). Glycyl lysine isopeptide (Lys-Gly) (interchain with G-Cter in SUMO2) cross-links involve residues Lys-908 and Lys-916. Position 929 is a phosphoserine (Ser-929).

It belongs to the DEAD box helicase family. DDX46/PRP5 subfamily. Component of the 17S U2 SnRNP complex, a ribonucleoprotein complex that contains small nuclear RNA (snRNA) U2 and a number of specific proteins. Within the 17S U2 SnRNP complex, DDX46 is part of the SF3B subcomplex, which is required for 'A' complex assembly formed by the stable binding of U2 snRNP to the branchpoint sequence in pre-mRNA. Recruited to the 17S U2 SnRNP complex following release of DDX42; DDX42 and DDX46 bind the SF3B subcomplex in a competitive manner.

It is found in the nucleus speckle. The protein resides in the nucleus. The protein localises to the cajal body. It catalyses the reaction ATP + H2O = ADP + phosphate + H(+). Its function is as follows. Component of the 17S U2 SnRNP complex of the spliceosome, a large ribonucleoprotein complex that removes introns from transcribed pre-mRNAs. The 17S U2 SnRNP complex (1) directly participates in early spliceosome assembly and (2) mediates recognition of the intron branch site during pre-mRNA splicing by promoting the selection of the pre-mRNA branch-site adenosine, the nucleophile for the first step of splicing. Within the 17S U2 SnRNP complex, DDX46 plays essential roles during assembly of pre-spliceosome and proofreading of the branch site. This Rattus norvegicus (Rat) protein is Probable ATP-dependent RNA helicase DDX46 (Ddx46).